Consider the following 273-residue polypeptide: Formamidopyrimidine-DNA glycosylase (273 aa).

Residue Pro2 is the Schiff-base intermediate with DNA of the active site. Glu3 functions as the Proton donor in the catalytic mechanism. Lys60 functions as the Proton donor; for beta-elimination activity in the catalytic mechanism. Residues His94, Arg113, and Arg154 each contribute to the DNA site. An FPG-type zinc finger spans residues 239 to 273; that stretch reads NAYDREGQPCPRCGATIIKTVVAQRGTHYCPECQR. Arg263 functions as the Proton donor; for delta-elimination activity in the catalytic mechanism.

This sequence belongs to the FPG family. Monomer. Requires Zn(2+) as cofactor.

The enzyme catalyses Hydrolysis of DNA containing ring-opened 7-methylguanine residues, releasing 2,6-diamino-4-hydroxy-5-(N-methyl)formamidopyrimidine.. It carries out the reaction 2'-deoxyribonucleotide-(2'-deoxyribose 5'-phosphate)-2'-deoxyribonucleotide-DNA = a 3'-end 2'-deoxyribonucleotide-(2,3-dehydro-2,3-deoxyribose 5'-phosphate)-DNA + a 5'-end 5'-phospho-2'-deoxyribonucleoside-DNA + H(+). In terms of biological role, involved in base excision repair of DNA damaged by oxidation or by mutagenic agents. Acts as a DNA glycosylase that recognizes and removes damaged bases. Has a preference for oxidized purines, such as 7,8-dihydro-8-oxoguanine (8-oxoG). Has AP (apurinic/apyrimidinic) lyase activity and introduces nicks in the DNA strand. Cleaves the DNA backbone by beta-delta elimination to generate a single-strand break at the site of the removed base with both 3'- and 5'-phosphates. The chain is Formamidopyrimidine-DNA glycosylase from Roseiflexus sp. (strain RS-1).